The following is a 187-amino-acid chain: 2-oxoglutarate synthase subunit KorC (187 aa).

In terms of assembly, heterotetramer of the KorA, KorB, KorC and KorD subunits.

It carries out the reaction 2 oxidized [2Fe-2S]-[ferredoxin] + 2-oxoglutarate + CoA = succinyl-CoA + 2 reduced [2Fe-2S]-[ferredoxin] + CO2 + H(+). This Archaeoglobus fulgidus (strain ATCC 49558 / DSM 4304 / JCM 9628 / NBRC 100126 / VC-16) protein is 2-oxoglutarate synthase subunit KorC (korC).